The primary structure comprises 208 residues: Proteasome subunit beta 2 (208 aa).

Residues 1–14 (MGNELQLENKILKG) constitute a propeptide, removed in mature form; by autocatalysis. Thr15 functions as the Nucleophile in the catalytic mechanism.

This sequence belongs to the peptidase T1B family. As to quaternary structure, the 20S proteasome core is composed of 14 alpha and 14 beta subunits that assemble into four stacked heptameric rings, resulting in a barrel-shaped structure. The two inner rings, each composed of seven catalytic beta subunits, are sandwiched by two outer rings, each composed of seven alpha subunits. The catalytic chamber with the active sites is on the inside of the barrel. Has a gated structure, the ends of the cylinder being occluded by the N-termini of the alpha-subunits. Is capped at one or both ends by the proteasome regulatory ATPase, PAN.

The protein localises to the cytoplasm. It catalyses the reaction Cleavage of peptide bonds with very broad specificity.. With respect to regulation, the formation of the proteasomal ATPase PAN-20S proteasome complex, via the docking of the C-termini of PAN into the intersubunit pockets in the alpha-rings, triggers opening of the gate for substrate entry. Interconversion between the open-gate and close-gate conformations leads to a dynamic regulation of the 20S proteasome proteolysis activity. Its function is as follows. Component of the proteasome core, a large protease complex with broad specificity involved in protein degradation. The chain is Proteasome subunit beta 2 from Saccharolobus solfataricus (strain ATCC 35092 / DSM 1617 / JCM 11322 / P2) (Sulfolobus solfataricus).